The following is a 312-amino-acid chain: 1-phosphofructokinase (312 aa).

Residues 223-228 (SLGAEG) and 254-255 (GD) each bind ATP. The active-site Proton acceptor is aspartate 255.

Belongs to the carbohydrate kinase PfkB family.

The catalysed reaction is beta-D-fructose 1-phosphate + ATP = beta-D-fructose 1,6-bisphosphate + ADP + H(+). Catalyzes the ATP-dependent phosphorylation of fructose-l-phosphate to fructose-l,6-bisphosphate. This Escherichia coli O157:H7 protein is 1-phosphofructokinase (fruK).